Consider the following 163-residue polypeptide: D-aminoacyl-tRNA deacylase (163 aa).

The Gly-cisPro motif, important for rejection of L-amino acids motif lies at 141–142 (GP).

It belongs to the DTD family. As to quaternary structure, homodimer.

It is found in the cytoplasm. The catalysed reaction is glycyl-tRNA(Ala) + H2O = tRNA(Ala) + glycine + H(+). It carries out the reaction a D-aminoacyl-tRNA + H2O = a tRNA + a D-alpha-amino acid + H(+). Functionally, an aminoacyl-tRNA editing enzyme that deacylates mischarged D-aminoacyl-tRNAs. Also deacylates mischarged glycyl-tRNA(Ala), protecting cells against glycine mischarging by AlaRS. Acts via tRNA-based rather than protein-based catalysis; rejects L-amino acids rather than detecting D-amino acids in the active site. By recycling D-aminoacyl-tRNA to D-amino acids and free tRNA molecules, this enzyme counteracts the toxicity associated with the formation of D-aminoacyl-tRNA entities in vivo and helps enforce protein L-homochirality. This Neisseria meningitidis serogroup B (strain ATCC BAA-335 / MC58) protein is D-aminoacyl-tRNA deacylase.